A 368-amino-acid polypeptide reads, in one-letter code: 3-dehydroquinate synthase (368 aa).

Residues 71 to 76 (DGEAFK), 105 to 109 (GVVGD), 129 to 130 (TT), lysine 142, lysine 151, and 169 to 172 (TLRT) each bind NAD(+). Glutamate 184, histidine 247, and histidine 264 together coordinate Zn(2+).

This sequence belongs to the sugar phosphate cyclases superfamily. Dehydroquinate synthase family. Requires Co(2+) as cofactor. It depends on Zn(2+) as a cofactor. NAD(+) is required as a cofactor.

The protein resides in the cytoplasm. The enzyme catalyses 7-phospho-2-dehydro-3-deoxy-D-arabino-heptonate = 3-dehydroquinate + phosphate. It participates in metabolic intermediate biosynthesis; chorismate biosynthesis; chorismate from D-erythrose 4-phosphate and phosphoenolpyruvate: step 2/7. In terms of biological role, catalyzes the conversion of 3-deoxy-D-arabino-heptulosonate 7-phosphate (DAHP) to dehydroquinate (DHQ). This is 3-dehydroquinate synthase from Cupriavidus pinatubonensis (strain JMP 134 / LMG 1197) (Cupriavidus necator (strain JMP 134)).